A 389-amino-acid chain; its full sequence is MASEIMTLNMGPQHPSTHGVLRLVVELDGEVIQKITPHIGYLHRGIEKLSEHRTYHQALPLTDRMDYLAPMHNNLGYVLAVEKLLGIEVPERAETIRVIMAELTRLKSHLVWIACHALDIGAMTVFIYAFREREKIMELYEMVSGARMTSNYFRVGGLSRDLPAGFESAVQEILDTFPGHFDTYEGLLTKNTIWLQRTIGNGVISADDAIDFGISGPALRGSGVDFDLRRDLPYSGYEKYDFKVPVGENCDTFDRYKVRLVEMREAVKIIDQAMKRLKPGPILADAPQVCYPPKESVYNSIEGLIHHFKIASEGFPVPEGEVYQGVENPKGELGYYMVSDGGSKPYRMRVRPPSFVNLGAIEKMAKGSMIADLVAVIGTLDIVLGEIDR.

The protein belongs to the complex I 49 kDa subunit family. In terms of assembly, NDH-1 is composed of 14 different subunits. Subunits NuoB, C, D, E, F, and G constitute the peripheral sector of the complex.

It localises to the cell inner membrane. It catalyses the reaction a quinone + NADH + 5 H(+)(in) = a quinol + NAD(+) + 4 H(+)(out). NDH-1 shuttles electrons from NADH, via FMN and iron-sulfur (Fe-S) centers, to quinones in the respiratory chain. The immediate electron acceptor for the enzyme in this species is believed to be ubiquinone. Couples the redox reaction to proton translocation (for every two electrons transferred, four hydrogen ions are translocated across the cytoplasmic membrane), and thus conserves the redox energy in a proton gradient. The chain is NADH-quinone oxidoreductase subunit D from Citrifermentans bemidjiense (strain ATCC BAA-1014 / DSM 16622 / JCM 12645 / Bem) (Geobacter bemidjiensis).